A 167-amino-acid polypeptide reads, in one-letter code: UPF0114 protein Tola_1474 (167 aa).

Transmembrane regions (helical) follow at residues 15 to 35, 53 to 73, 109 to 129, and 136 to 156; these read IMAPIYLGLSLALLALGIKFF, LILIILSLIDISLVGGLIVMV, VAASIVAISSIHLLKVFMNTE, and IKWYLLIHITFVMSAFAMGYL.

Belongs to the UPF0114 family.

It is found in the cell membrane. The chain is UPF0114 protein Tola_1474 from Tolumonas auensis (strain DSM 9187 / NBRC 110442 / TA 4).